We begin with the raw amino-acid sequence, 429 residues long: Adenylosuccinate synthetase (429 aa).

Residues 12–18 and 40–42 contribute to the GTP site; these read GDEGKGK and GHT. Aspartate 13 functions as the Proton acceptor in the catalytic mechanism. Mg(2+) is bound by residues aspartate 13 and glycine 40. IMP is bound by residues 13–16, 38–41, threonine 128, arginine 142, glutamine 223, threonine 238, and arginine 302; these read DEGK and NAGH. Residue histidine 41 is the Proton donor of the active site. 298-304 is a substrate binding site; the sequence is VNTGRKR. GTP-binding positions include arginine 304, 330–332, and 412–414; these read KLD and GVG.

It belongs to the adenylosuccinate synthetase family. Homodimer. Requires Mg(2+) as cofactor.

The protein localises to the cytoplasm. It catalyses the reaction IMP + L-aspartate + GTP = N(6)-(1,2-dicarboxyethyl)-AMP + GDP + phosphate + 2 H(+). Its pathway is purine metabolism; AMP biosynthesis via de novo pathway; AMP from IMP: step 1/2. Its function is as follows. Plays an important role in the de novo pathway of purine nucleotide biosynthesis. Catalyzes the first committed step in the biosynthesis of AMP from IMP. This Corynebacterium diphtheriae (strain ATCC 700971 / NCTC 13129 / Biotype gravis) protein is Adenylosuccinate synthetase.